Consider the following 97-residue polypeptide: Citrate lyase acyl carrier protein (97 aa).

Ser14 carries the O-(phosphoribosyl dephospho-coenzyme A)serine modification.

It belongs to the CitD family. In terms of assembly, oligomer with a subunit composition of (alpha,beta,gamma)6.

Its subcellular location is the cytoplasm. Covalent carrier of the coenzyme of citrate lyase. This is Citrate lyase acyl carrier protein from Lactobacillus acidophilus (strain ATCC 700396 / NCK56 / N2 / NCFM).